The sequence spans 129 residues: Putative CC-type chemokine FPV061 (129 aa).

This sequence belongs to the intercrine beta (chemokine CC) family. Highly divergent.

This Fowlpox virus (strain NVSL) (FPV) protein is Putative CC-type chemokine FPV061.